The following is a 368-amino-acid chain: Putative agmatine deiminase (368 aa).

The active-site Amidino-cysteine intermediate is the C359.

The protein belongs to the agmatine deiminase family.

It catalyses the reaction agmatine + H2O = N-carbamoylputrescine + NH4(+). The protein is Putative agmatine deiminase of Pectobacterium atrosepticum (strain SCRI 1043 / ATCC BAA-672) (Erwinia carotovora subsp. atroseptica).